The sequence spans 207 residues: High frequency lysogenization protein HflD homolog (207 aa).

The protein belongs to the HflD family.

The protein localises to the cytoplasm. The protein resides in the cell inner membrane. This is High frequency lysogenization protein HflD homolog from Pseudomonas fluorescens (strain ATCC BAA-477 / NRRL B-23932 / Pf-5).